Consider the following 66-residue polypeptide: Large ribosomal subunit protein bL33c (66 aa).

Belongs to the bacterial ribosomal protein bL33 family.

Its subcellular location is the plastid. It is found in the chloroplast. The polypeptide is Large ribosomal subunit protein bL33c (Drimys granadensis).